A 385-amino-acid chain; its full sequence is Glucose-fructose oxidoreductase domain-containing protein 2 (385 aa).

Residues 1–25 (MKMLPGVGVFGTGSSARVLVPLLRA) form the signal peptide.

Belongs to the Gfo/Idh/MocA family.

Its subcellular location is the secreted. It localises to the extracellular space. It is found in the extracellular matrix. In terms of biological role, promotes matrix assembly. In Bos taurus (Bovine), this protein is Glucose-fructose oxidoreductase domain-containing protein 2 (GFOD2).